A 688-amino-acid chain; its full sequence is Zinc finger CCCH domain-containing protein 22 (688 aa).

Residues 62–123 (ALLPPPPPPS…QPFSRSNGSV (62 aa)) are disordered. Over residues 101-117 (PLSASSPSSWAQAQPFS) the composition is skewed to low complexity. The C3H1-type zinc-finger motif lies at 233–260 (GFGWKPCLYYARGFCKNGSSCRFVHGDD). The 77-residue stretch at 366–442 (RQIYLTFPAD…RVLVKPYKEK (77 aa)) folds into the RRM domain. The stretch at 487-522 (TNEMMLRRKLEEQQQAAELQQAIELHSRRLMDLQLL) forms a coiled coil. Residues 552–624 (LATTMVESPP…PTKSSVSAHQ (73 aa)) are disordered. Basic and acidic residues predominate over residues 574-589 (TEERKMVNGGGDKEES). Positions 613–624 (ASPTKSSVSAHQ) are enriched in polar residues.

The chain is Zinc finger CCCH domain-containing protein 22 from Oryza sativa subsp. japonica (Rice).